Here is a 457-residue protein sequence, read N- to C-terminus: Adenylosuccinate synthetase isozyme 1 (457 aa).

The disordered stretch occupies residues 1–25 (MSGTRASNDRPPSAGGVKRGRLQHE). Residues 42 to 48 (GDEGKGK) and 70 to 72 (GHT) contribute to the GTP site. D43 acts as the Proton acceptor in catalysis. Mg(2+) contacts are provided by D43 and G70. D43 is a substrate binding site. Residues 43 to 46 (DEGK), 68 to 71 (NAGH), T163, R177, N256, T271, and R335 each bind IMP. Catalysis depends on H71, which acts as the Proton donor. 331–337 (VTTGRKR) contacts substrate. Residues R337, 363 to 365 (KLD), and 445 to 448 (GVGK) each bind GTP.

The protein belongs to the adenylosuccinate synthetase family. In terms of assembly, homodimer. The cofactor is Mg(2+). As to expression, predominantly expressed in the striated muscle tissues.

The protein localises to the cytoplasm. The catalysed reaction is IMP + L-aspartate + GTP = N(6)-(1,2-dicarboxyethyl)-AMP + GDP + phosphate + 2 H(+). It functions in the pathway purine metabolism; AMP biosynthesis via de novo pathway; AMP from IMP: step 1/2. Functionally, component of the purine nucleotide cycle (PNC), which interconverts IMP and AMP to regulate the nucleotide levels in various tissues, and which contributes to glycolysis and ammoniagenesis. Catalyzes the first committed step in the biosynthesis of AMP from IMP. The sequence is that of Adenylosuccinate synthetase isozyme 1 from Sus scrofa (Pig).